A 246-amino-acid polypeptide reads, in one-letter code: Acetoacetate decarboxylase (246 aa).

Lysine 116 serves as the catalytic Schiff-base intermediate with acetoacetate.

It belongs to the ADC family.

The catalysed reaction is acetoacetate + H(+) = acetone + CO2. In terms of biological role, catalyzes the conversion of acetoacetate to acetone and carbon dioxide. This chain is Acetoacetate decarboxylase, found in Burkholderia multivorans (strain ATCC 17616 / 249).